Consider the following 135-residue polypeptide: ATP synthase epsilon chain (135 aa).

This sequence belongs to the ATPase epsilon chain family. In terms of assembly, F-type ATPases have 2 components, CF(1) - the catalytic core - and CF(0) - the membrane proton channel. CF(1) has five subunits: alpha(3), beta(3), gamma(1), delta(1), epsilon(1). CF(0) has three main subunits: a, b and c.

The protein resides in the cell inner membrane. Functionally, produces ATP from ADP in the presence of a proton gradient across the membrane. The sequence is that of ATP synthase epsilon chain from Rhodopseudomonas palustris (strain BisB18).